The chain runs to 771 residues: Rho guanine nucleotide exchange factor 6 (771 aa).

Residues Met1–Glu111 enclose the Calponin-homology (CH) domain. Positions Ser115–Asn157 are disordered. The segment covering Ser122–Ser131 has biased composition (low complexity). Ser126 is modified (phosphoserine). Thr133 is subject to Phosphothreonine. The 60-residue stretch at Ser159–Pro218 folds into the SH3 domain. At Ser224 the chain carries Phosphoserine. The 181-residue stretch at Tyr240–Leu420 folds into the DH domain. A PH domain is found at Asp442–Lys547. Ser487 is modified (phosphoserine). A compositionally biased stretch (low complexity) spans Ser556–Thr572. Positions Ser556 to Glu580 are disordered. 2 positions are modified to phosphoserine: Ser639 and Ser679.

Interacts with PAK kinases through the SH3 domain. Interacts with GIT1. Component of cytoplasmic complexes, which also contain PXN, GIT1 and PAK1. Interacts with BIN2. Identified in a complex with BIN2 and GIT2. Interacts with PARVB. Interacts with PARVG; the guanine nucleotide exchange factor activity of ARHGEF6 is essential for PARVG-induced enhancement of cell spreading. Detected in adult heart, spleen, lung, skeletal muscle, kidney and testis. Detected throughout embryogenesis.

Its subcellular location is the cell projection. It localises to the lamellipodium. Acts as a RAC1 guanine nucleotide exchange factor (GEF). The sequence is that of Rho guanine nucleotide exchange factor 6 (Arhgef6) from Mus musculus (Mouse).